The sequence spans 578 residues: Zinc finger protein with KRAB and SCAN domains 8 (578 aa).

Positions 1–20 are disordered; the sequence is MAEESRKPSAPSPPDQTPEE. Residue S12 is modified to Phosphoserine. K26 is covalently cross-linked (Glycyl lysine isopeptide (Lys-Gly) (interchain with G-Cter in SUMO2)). Residues 51–133 enclose the SCAN box domain; sequence RLRFRQLRYQ…TLLEDLERQI (83 aa). A disordered region spans residues 158-205; the sequence is ASAPEPPNTQLQSEATQHKSPVPQESQERAMSTSQSPTRSQKGSSGDQ. Residues 165–205 are compositionally biased toward polar residues; the sequence is NTQLQSEATQHKSPVPQESQERAMSTSQSPTRSQKGSSGDQ. Residues K176 and K199 each participate in a glycyl lysine isopeptide (Lys-Gly) (interchain with G-Cter in SUMO2) cross-link. Residue S201 is modified to Phosphoserine. One can recognise a KRAB domain in the interval 220–316; sequence EKIEDMAVSL…GRLERQRGNP (97 aa). Glycyl lysine isopeptide (Lys-Gly) (interchain with G-Cter in SUMO2) cross-links involve residues K221, K272, and K288. C2H2-type zinc fingers lie at residues 322-344 and 350-372; these read HKCDECGKSFAQSSGLVRHWRIH and YQCNVCGKAFSYRSALLSHQDIH. Residues K374 and K376 each participate in a glycyl lysine isopeptide (Lys-Gly) (interchain with G-Cter in SUMO2) cross-link. 7 C2H2-type zinc fingers span residues 378-400, 406-428, 434-456, 462-484, 490-512, 518-540, and 546-568; these read YHCKECGKAFSQNTGLILHQRIH, YQCNQCGKAFSQSAGLILHQRIH, YECNECGKAFSHSSHLIGHQRIH, YECDECGKTFRRSSHLIGHQRSH, YKCNECGRAFSQKSGLIEHQRIH, YKCKECGKAFNGNTGLIQHLRIH, and YQCNECGKAFIQRSSLIRHQRIH. Glycyl lysine isopeptide (Lys-Gly) (interchain with G-Cter in SUMO2) cross-links involve residues K413 and K441. K502 is covalently cross-linked (Glycyl lysine isopeptide (Lys-Gly) (interchain with G-Cter in SUMO2)). A Glycyl lysine isopeptide (Lys-Gly) (interchain with G-Cter in SUMO2) cross-link involves residue K572.

It belongs to the krueppel C2H2-type zinc-finger protein family.

The protein resides in the nucleus. In terms of biological role, may be involved in transcriptional regulation. The polypeptide is Zinc finger protein with KRAB and SCAN domains 8 (ZKSCAN8) (Homo sapiens (Human)).